The sequence spans 1627 residues: DNA topoisomerase 2-beta (1627 aa).

ATP-binding positions include N117, N146, 174–176 (SSN), and 187–194 (GRNGYGAK). The tract at residues 368-370 (KKK) is interaction with DNA. Residue 402–404 (QTK) coordinates ATP. The region spanning 481–598 (CTLILTEGDS…SLLKHGFLEE (118 aa)) is the Toprim domain. E487, D567, and D569 together coordinate Mg(2+). The region spanning 741-1194 (IPSLVDGLKP…SASDLWKEDL (454 aa)) is the Topo IIA-type catalytic domain. Y831 serves as the catalytic O-(5'-phospho-DNA)-tyrosine intermediate. The segment at 1016 to 1025 (KLQTSLTCNS) is interaction with DNA. Disordered stretches follow at residues 1115 to 1144 (AWKEAQEKAAEEEDPQNANDDASSASGSTS), 1224 to 1248 (KVGKPKMKKLQLEETMPSPFGRRIV), 1283 to 1365 (EFGG…DSLL), and 1378 to 1627 (DFSK…DMFN). Low complexity predominate over residues 1131–1144 (NANDDASSASGSTS). A compositionally biased stretch (polar residues) spans 1296–1305 (TVNTAASGTK). A compositionally biased stretch (basic and acidic residues) spans 1339–1349 (PWSDDESKSES). Acidic residues-rich tracts occupy residues 1381–1392 (KEEDDAHDDDDA) and 1412–1428 (REDEFVPSDSVEKDEYD). Basic and acidic residues-rich tracts occupy residues 1436–1448 (PSPEKMSQEKKNQ) and 1462–1471 (KTDDDTTKLD). 2 stretches are compositionally biased toward basic residues: residues 1542–1552 (GKGRGAKKRKT) and 1566–1578 (KAPKSTPCKKSKK). Acidic residues predominate over residues 1616 to 1627 (ESDEDDDFDMFN).

The protein belongs to the type II topoisomerase family. Homodimer. It depends on Mg(2+) as a cofactor. The cofactor is Mn(2+). Ca(2+) serves as cofactor.

It localises to the nucleus. Its subcellular location is the nucleolus. The protein localises to the nucleoplasm. It catalyses the reaction ATP-dependent breakage, passage and rejoining of double-stranded DNA.. Key decatenating enzyme that alters DNA topology by binding to two double-stranded DNA molecules, generating a double-stranded break in one of the strands, passing the intact strand through the broken strand, and religating the broken strand. Plays a role in B-cell differentiation. In Gallus gallus (Chicken), this protein is DNA topoisomerase 2-beta (TOP2B).